The primary structure comprises 451 residues: Chromosomal replication initiator protein DnaA (451 aa).

The interval 1–77 (MTENEQIFWN…EVYNAQISVD (77 aa)) is domain I, interacts with DnaA modulators. Positions 77–110 (DYVFEEDLMIEQNQTKINQKPKQQALNSLPTVTS) are domain II. The domain III, AAA+ region stretch occupies residues 111–329 (DLNPKYSFEN…GALKDISLVA (219 aa)). ATP is bound by residues Gly-155, Gly-157, Lys-158, and Thr-159. Residues 330-451 (NFKQIDTITV…EIETIKNKIK (122 aa)) form a domain IV, binds dsDNA region.

This sequence belongs to the DnaA family. Oligomerizes as a right-handed, spiral filament on DNA at oriC.

The protein resides in the cytoplasm. Functionally, plays an essential role in the initiation and regulation of chromosomal replication. ATP-DnaA binds to the origin of replication (oriC) to initiate formation of the DNA replication initiation complex once per cell cycle. Binds the DnaA box (a 9 base pair repeat at the origin) and separates the double-stranded (ds)DNA. Forms a right-handed helical filament on oriC DNA; dsDNA binds to the exterior of the filament while single-stranded (ss)DNA is stabiized in the filament's interior. The ATP-DnaA-oriC complex binds and stabilizes one strand of the AT-rich DNA unwinding element (DUE), permitting loading of DNA polymerase. After initiation quickly degrades to an ADP-DnaA complex that is not apt for DNA replication. Binds acidic phospholipids. The sequence is that of Chromosomal replication initiator protein DnaA from Streptococcus pyogenes serotype M4 (strain MGAS10750).